A 411-amino-acid polypeptide reads, in one-letter code: KIN17-like protein (411 aa).

A C2H2-type zinc finger spans residues 28 to 50; that stretch reads CQMCQKQCRDENGFKCHCMSESH. The tract at residues 51-160 is winged helix-turn-helix (wHTH); that stretch reads QRQMQVFGQN…KERLKNKRVK (110 aa). The stretch at 147 to 183 forms a coiled coil; that stretch reads ETLFKERLKNKRVKSDLAEEEKQEREIQRQIERAAEK. 2 disordered regions span residues 182 to 211 and 232 to 286; these read EKLN…KKDE and VATG…EEEK. Positions 253–286 are enriched in basic and acidic residues; it reads KVERGEKRKRSGDSGRSEKERRSALDELMKEEEK. A Nuclear localization signal (NLS) motif is present at residues 259–262; that stretch reads KRKR. Residues 265 to 294 adopt a coiled-coil conformation; sequence DSGRSEKERRSALDELMKEEEKKKERMNRK. A C-terminal subdomain A region spans residues 301–352; the sequence is GIIVKVMSKALAEKGYYKQKGVVKKVIDNYVGEIKMLDSKHVLRVDQKELET. A C-terminal subdomain B region spans residues 358 to 409; sequence GGMVKIVNGAYRGSNARLLGVDTEKFCAKVQIEKGVYDGRVIKSIEYEDICK.

This sequence belongs to the KIN17 family. In terms of assembly, interacts with SPL7. In terms of tissue distribution, expressed in root vasculature, lateral roots, cotyledons, rosette leaves, cauline leaves, stems, sepals, style of pistils, mature pollen grains and siliques.

The protein resides in the nucleus speckle. In terms of biological role, promotes the copper deficiency response by direct interaction with SPL7. Acts with SPL7 in a common pathway to promote copper-responsive genes and alleviate oxidative stress during copper-limiting periods. May promote SPL7 function when copper is limiting. Participates in the control of general plant growth and development, and in the response to counteract the negative effects of UV radiation. In Arabidopsis thaliana (Mouse-ear cress), this protein is KIN17-like protein.